Consider the following 286-residue polypeptide: Bifunctional protein FolD (286 aa).

NADP(+) is bound by residues 164–166 (GRS), serine 193, and isoleucine 234.

It belongs to the tetrahydrofolate dehydrogenase/cyclohydrolase family. Homodimer.

It carries out the reaction (6R)-5,10-methylene-5,6,7,8-tetrahydrofolate + NADP(+) = (6R)-5,10-methenyltetrahydrofolate + NADPH. It catalyses the reaction (6R)-5,10-methenyltetrahydrofolate + H2O = (6R)-10-formyltetrahydrofolate + H(+). Its pathway is one-carbon metabolism; tetrahydrofolate interconversion. In terms of biological role, catalyzes the oxidation of 5,10-methylenetetrahydrofolate to 5,10-methenyltetrahydrofolate and then the hydrolysis of 5,10-methenyltetrahydrofolate to 10-formyltetrahydrofolate. This chain is Bifunctional protein FolD, found in Maridesulfovibrio salexigens (strain ATCC 14822 / DSM 2638 / NCIMB 8403 / VKM B-1763) (Desulfovibrio salexigens).